A 149-amino-acid chain; its full sequence is Nucleoside diphosphate kinase (149 aa).

ATP-binding residues include Lys9, Phe57, Arg85, Thr91, Arg102, and Asn112. The active-site Pros-phosphohistidine intermediate is His115.

Belongs to the NDK family. Homotetramer. It depends on Mg(2+) as a cofactor.

It localises to the cytoplasm. It catalyses the reaction a 2'-deoxyribonucleoside 5'-diphosphate + ATP = a 2'-deoxyribonucleoside 5'-triphosphate + ADP. The enzyme catalyses a ribonucleoside 5'-diphosphate + ATP = a ribonucleoside 5'-triphosphate + ADP. Major role in the synthesis of nucleoside triphosphates other than ATP. The ATP gamma phosphate is transferred to the NDP beta phosphate via a ping-pong mechanism, using a phosphorylated active-site intermediate. The protein is Nucleoside diphosphate kinase of Roseiflexus castenholzii (strain DSM 13941 / HLO8).